We begin with the raw amino-acid sequence, 363 residues long: NAD(P)H-quinone oxidoreductase subunit 1, chloroplastic (363 aa).

6 helical membrane-spanning segments follow: residues 30–50 (FLPI…IVWL), 104–124 (IAVI…HLVL), 129–149 (IGVF…LMSG), 248–268 (YSGI…LVSS), 300–320 (VFGT…FLFI), and 343–363 (FLLP…LLSL).

It belongs to the complex I subunit 1 family. In terms of assembly, NDH is composed of at least 16 different subunits, 5 of which are encoded in the nucleus.

Its subcellular location is the plastid. It is found in the chloroplast thylakoid membrane. The catalysed reaction is a plastoquinone + NADH + (n+1) H(+)(in) = a plastoquinol + NAD(+) + n H(+)(out). It carries out the reaction a plastoquinone + NADPH + (n+1) H(+)(in) = a plastoquinol + NADP(+) + n H(+)(out). In terms of biological role, NDH shuttles electrons from NAD(P)H:plastoquinone, via FMN and iron-sulfur (Fe-S) centers, to quinones in the photosynthetic chain and possibly in a chloroplast respiratory chain. The immediate electron acceptor for the enzyme in this species is believed to be plastoquinone. Couples the redox reaction to proton translocation, and thus conserves the redox energy in a proton gradient. This chain is NAD(P)H-quinone oxidoreductase subunit 1, chloroplastic, found in Eucalyptus globulus subsp. globulus (Tasmanian blue gum).